The sequence spans 533 residues: Tryptophan N-monooxygenase CYP79A68 (533 aa).

Residues 12–32 (VTPPISLSLAFIIFMFLVKFI) form a helical membrane-spanning segment. Asn-209 carries an N-linked (GlcNAc...) asparagine glycan. Cys-471 is a binding site for heme.

This sequence belongs to the cytochrome P450 family. Requires heme as cofactor. Confined to buds.

The protein localises to the membrane. The catalysed reaction is L-tryptophan + 2 reduced [NADPH--hemoprotein reductase] + 2 O2 = (E)-(indol-3-yl)acetaldehyde oxime + 2 oxidized [NADPH--hemoprotein reductase] + CO2 + 3 H2O + 2 H(+). Its function is as follows. Catalyzes with low efficiency E and Z isomers of indole-3-acetaldoxime from tryptophan (Trp). This Prunus mume (Japanese apricot) protein is Tryptophan N-monooxygenase CYP79A68.